A 354-amino-acid chain; its full sequence is MMYRVLRRALFLAPAERVHVWVFALLRAVTWAAPLRAALARLLAPRDPILASTVFGVHFPGPLGLAAGFDKNGRGLAAWGALGFGYAEVGTVTAQPQPGNPAPRLFRLPDDHALLNRMGFNNEGAGALAQRLTRGKSDIPIGVNIGKTKVTPAEEAVADYVTSARLLNSLASFVVVNVSSPNTPGLRDLQAVAALRPILAAVKAETTKPVLVKIAPDLSDSDIDEIADLAVELGLAGIVATNTTVSRDGLLTPGVADLGPGGISGRPVARRSAEVLRRLYRRVGDKLVLISVGGIETADDAWERIVSGASLLQGYTGFIYGGGLWAKHIHDGIAGRLRACGFTTLSEAVGSAVR.

FMN is bound by residues 67–71 and T91; that span reads AGFDK. K71 is a substrate binding site. 116-120 is a substrate binding site; that stretch reads NRMGF. FMN contacts are provided by N144 and N177. N177 serves as a coordination point for substrate. Residue S180 is the Nucleophile of the active site. N182 contacts substrate. The FMN site is built by K213 and T241. Residue 242–243 participates in substrate binding; the sequence is NT. FMN is bound by residues G265, G294, and 315–316; that span reads YT.

It belongs to the dihydroorotate dehydrogenase family. Type 2 subfamily. As to quaternary structure, monomer. It depends on FMN as a cofactor.

It localises to the cell membrane. It carries out the reaction (S)-dihydroorotate + a quinone = orotate + a quinol. Its pathway is pyrimidine metabolism; UMP biosynthesis via de novo pathway; orotate from (S)-dihydroorotate (quinone route): step 1/1. Functionally, catalyzes the conversion of dihydroorotate to orotate with quinone as electron acceptor. The protein is Dihydroorotate dehydrogenase (quinone) of Mycolicibacterium smegmatis (strain ATCC 700084 / mc(2)155) (Mycobacterium smegmatis).